Consider the following 59-residue polypeptide: Toxin TxpA (59 aa).

The chain crosses the membrane as a helical span at residues 7–27 (LMVMIGFANLIGGIMTWVISL).

It is found in the cell membrane. Toxic component of a type I toxin-antitoxin (TA) system. Overexpression of txpA causes cell lysis; the TxpA protein has been suggested to act on the cell membrane or might possibly block cell wall synthesis. Overexpression in E.coli is not toxic. This Bacillus subtilis (strain 168) protein is Toxin TxpA.